The primary structure comprises 208 residues: Ribosomal RNA large subunit methyltransferase E (208 aa).

5 residues coordinate S-adenosyl-L-methionine: G63, W65, D83, D99, and D124. Catalysis depends on K164, which acts as the Proton acceptor.

Belongs to the class I-like SAM-binding methyltransferase superfamily. RNA methyltransferase RlmE family.

It is found in the cytoplasm. It catalyses the reaction uridine(2552) in 23S rRNA + S-adenosyl-L-methionine = 2'-O-methyluridine(2552) in 23S rRNA + S-adenosyl-L-homocysteine + H(+). Specifically methylates the uridine in position 2552 of 23S rRNA at the 2'-O position of the ribose in the fully assembled 50S ribosomal subunit. This is Ribosomal RNA large subunit methyltransferase E from Salmonella agona (strain SL483).